The following is a 402-amino-acid chain: Plasminogen activator inhibitor 1 (402 aa).

An N-terminal signal peptide occupies residues 1–23 (MQMSPALTCLVLGLALVFGEGSA). 3 N-linked (GlcNAc...) asparagine glycosylation sites follow: N232, N288, and N352.

It belongs to the serpin family. In terms of assembly, forms a heterodimer with TMPRSS7. Interacts with VTN. Binds LRP1B; binding is followed by internalization and degradation. Interacts with PPP1CB. In complex with PLAU/uPA, interacts with PLAUR/uPAR. Interacts with SORL1 and LRP1, either alone or in complex with PLAU; these interactions are abolished in the presence of LRPAP1/RAP. The ternary complex composed of PLAUR-PLAU-PAI1 also interacts with SORL1. Interacts with PLAT/tPA. Also interacts with SORL1, when complexed to PLAT/tPA. Inactivated by proteolytic attack of the urokinase-type (u-PA) and the tissue-type (TPA), cleaving the 369-Arg-|-Met-370 bond. In terms of tissue distribution, expressed in endothelial cells. Found in plasma, platelets, and hepatoma and fibrosarcoma cells.

The protein localises to the secreted. In terms of biological role, serine protease inhibitor. Inhibits TMPRSS7. Is a primary inhibitor of tissue-type plasminogen activator (PLAT) and urokinase-type plasminogen activator (PLAU). As PLAT inhibitor, it is required for fibrinolysis down-regulation and is responsible for the controlled degradation of blood clots. As PLAU inhibitor, it is involved in the regulation of cell adhesion and spreading. Acts as a regulator of cell migration, independently of its role as protease inhibitor. It is required for stimulation of keratinocyte migration during cutaneous injury repair. It is involved in cellular and replicative senescence. Plays a role in alveolar type 2 cells senescence in the lung. Is involved in the regulation of cementogenic differentiation of periodontal ligament stem cells, and regulates odontoblast differentiation and dentin formation during odontogenesis. The polypeptide is Plasminogen activator inhibitor 1 (SERPINE1) (Homo sapiens (Human)).